The chain runs to 305 residues: UDP-3-O-acyl-N-acetylglucosamine deacetylase (305 aa).

Positions 78, 237, and 241 each coordinate Zn(2+). The active-site Proton donor is the His264.

It belongs to the LpxC family. The cofactor is Zn(2+).

The enzyme catalyses a UDP-3-O-[(3R)-3-hydroxyacyl]-N-acetyl-alpha-D-glucosamine + H2O = a UDP-3-O-[(3R)-3-hydroxyacyl]-alpha-D-glucosamine + acetate. The protein operates within glycolipid biosynthesis; lipid IV(A) biosynthesis; lipid IV(A) from (3R)-3-hydroxytetradecanoyl-[acyl-carrier-protein] and UDP-N-acetyl-alpha-D-glucosamine: step 2/6. Its function is as follows. Catalyzes the hydrolysis of UDP-3-O-myristoyl-N-acetylglucosamine to form UDP-3-O-myristoylglucosamine and acetate, the committed step in lipid A biosynthesis. In Cupriavidus pinatubonensis (strain JMP 134 / LMG 1197) (Cupriavidus necator (strain JMP 134)), this protein is UDP-3-O-acyl-N-acetylglucosamine deacetylase.